We begin with the raw amino-acid sequence, 517 residues long: Dermokine (517 aa).

Positions 1 to 21 (MKLQGSLACLLLALCLGGGAA) are cleaved as a signal peptide. Disordered regions lie at residues 51–83 (VGQGAKEAASSGIQNALGQGHGEEGGSTLMGSR) and 123–364 (AGSW…IQKE). 2 stretches are compositionally biased toward gly residues: residues 127-145 (GTSGGHGAYGSQGGAGVQG) and 167-176 (GSVGQGGNGG). The segment covering 197–206 (RGNNQNSGCT) has biased composition (polar residues). Low complexity predominate over residues 212 to 235 (GSHESFSNSGGSSNDGSRGSQGSH). Residues 236 to 250 (GSNGQGSSGRGGGQG) show a composition bias toward gly residues. Over residues 251–289 (NSDNNGSSSSSSGSNSGNSNSGNSGNSNSGNSGNSGSGS) the composition is skewed to low complexity. Composition is skewed to gly residues over residues 308–332 (GSRGGSGGSGGSGGSGGSGGSGGGN) and 347–358 (GGSGSQGHGSNG).

It belongs to the dermokine family. Homooligomer. Seems to be able to homodimerize and homotrimerize. O-glycosylated. As to expression, highly expressed in stratified epithelia; such as the skin, tongue, esophagus, forestomach and vagina. Also found in lung, trachea and urinary bladder.

It localises to the secreted. Functionally, may act as a soluble regulator of keratinocyte differentiation. In Mus musculus (Mouse), this protein is Dermokine (Dmkn).